We begin with the raw amino-acid sequence, 225 residues long: NAD(P)H-quinone oxidoreductase subunit K, chloroplastic (225 aa).

[4Fe-4S] cluster-binding residues include Cys-43, Cys-44, Cys-108, and Cys-139.

The protein belongs to the complex I 20 kDa subunit family. NDH is composed of at least 16 different subunits, 5 of which are encoded in the nucleus. The cofactor is [4Fe-4S] cluster.

The protein localises to the plastid. The protein resides in the chloroplast thylakoid membrane. It carries out the reaction a plastoquinone + NADH + (n+1) H(+)(in) = a plastoquinol + NAD(+) + n H(+)(out). The catalysed reaction is a plastoquinone + NADPH + (n+1) H(+)(in) = a plastoquinol + NADP(+) + n H(+)(out). NDH shuttles electrons from NAD(P)H:plastoquinone, via FMN and iron-sulfur (Fe-S) centers, to quinones in the photosynthetic chain and possibly in a chloroplast respiratory chain. The immediate electron acceptor for the enzyme in this species is believed to be plastoquinone. Couples the redox reaction to proton translocation, and thus conserves the redox energy in a proton gradient. The protein is NAD(P)H-quinone oxidoreductase subunit K, chloroplastic of Populus trichocarpa (Western balsam poplar).